We begin with the raw amino-acid sequence, 268 residues long: Mitochondrial distribution and morphology protein 12 (268 aa).

One can recognise an SMP-LTD domain in the interval 1-266 (MSIDLEWCKL…FPNFHTIVMA (266 aa)). A disordered region spans residues 66–136 (EDDEEGSDRG…PPPAENPHPN (71 aa)). Polar residues predominate over residues 102–111 (PATNVTSSLD). Residues 112-121 (TRSDQPDDQK) show a composition bias toward basic and acidic residues.

It belongs to the MDM12 family. Component of the ER-mitochondria encounter structure (ERMES) or MDM complex, composed of MMM1, MDM10, MDM12 and MDM34. An MMM1 homodimer associates with one molecule of MDM12 on each side in a pairwise head-to-tail manner, and the SMP-LTD domains of MMM1 and MDM12 generate a continuous hydrophobic tunnel for phospholipid trafficking.

The protein localises to the mitochondrion outer membrane. Its subcellular location is the endoplasmic reticulum membrane. Functionally, component of the ERMES/MDM complex, which serves as a molecular tether to connect the endoplasmic reticulum (ER) and mitochondria. Components of this complex are involved in the control of mitochondrial shape and protein biogenesis, and function in nonvesicular lipid trafficking between the ER and mitochondria. MDM12 is required for the interaction of the ER-resident membrane protein MMM1 and the outer mitochondrial membrane-resident beta-barrel protein MDM10. The MDM12-MMM1 subcomplex functions in the major beta-barrel assembly pathway that is responsible for biogenesis of all mitochondrial outer membrane beta-barrel proteins, and acts in a late step after the SAM complex. The MDM10-MDM12-MMM1 subcomplex further acts in the TOM40-specific pathway after the action of the MDM12-MMM1 complex. Essential for establishing and maintaining the structure of mitochondria and maintenance of mtDNA nucleoids. The chain is Mitochondrial distribution and morphology protein 12 from Laccaria bicolor (strain S238N-H82 / ATCC MYA-4686) (Bicoloured deceiver).